A 205-amino-acid polypeptide reads, in one-letter code: ESCRT-related protein CHMP1 (205 aa).

Coiled coils occupy residues 13-51 and 109-140; these read DLKF…MDGA and GNLQ…GAMA.

The protein belongs to the SNF7 family.

It is found in the cytoplasm. It localises to the endosome membrane. Functionally, involved in ESCRT-dependent multivesicular body (MVB) formation and sorting of endosomal cargo proteins into MVBs. The sequence is that of ESCRT-related protein CHMP1 from Oryza sativa subsp. japonica (Rice).